The primary structure comprises 262 residues: 2-keto-4-pentenoate hydratase (262 aa).

The protein belongs to the hydratase/decarboxylase family. MhpD subfamily. A divalent metal cation serves as cofactor.

It carries out the reaction (S)-4-hydroxy-2-oxopentanoate = (2Z)-2-hydroxypenta-2,4-dienoate + H2O. Its pathway is aromatic compound metabolism; 3-phenylpropanoate degradation. In terms of biological role, catalyzes the conversion of 2-hydroxypentadienoic acid (enolic form of 2-oxopent-4-enoate) to 4-hydroxy-2-ketopentanoic acid. In Burkholderia vietnamiensis (strain G4 / LMG 22486) (Burkholderia cepacia (strain R1808)), this protein is 2-keto-4-pentenoate hydratase.